Consider the following 262-residue polypeptide: Small ribosomal subunit protein uS2 (262 aa).

The protein belongs to the universal ribosomal protein uS2 family.

This chain is Small ribosomal subunit protein uS2, found in Borreliella afzelii (strain PKo) (Borrelia afzelii).